The primary structure comprises 313 residues: Tyrosine--tRNA ligase (313 aa).

Y32 serves as a coordination point for L-tyrosine. Positions 37 to 45 (PSGEIHLGH) match the 'HIGH' region motif. 4 residues coordinate L-tyrosine: Y152, Q156, D159, and Q174. Positions 208–212 (KMSSS) match the 'KMSKS' region motif. An ATP-binding site is contributed by S211.

Belongs to the class-I aminoacyl-tRNA synthetase family. TyrS type 3 subfamily. Homodimer.

It is found in the cytoplasm. It catalyses the reaction tRNA(Tyr) + L-tyrosine + ATP = L-tyrosyl-tRNA(Tyr) + AMP + diphosphate + H(+). Its function is as follows. Catalyzes the attachment of tyrosine to tRNA(Tyr) in a two-step reaction: tyrosine is first activated by ATP to form Tyr-AMP and then transferred to the acceptor end of tRNA(Tyr). The polypeptide is Tyrosine--tRNA ligase (Methanospirillum hungatei JF-1 (strain ATCC 27890 / DSM 864 / NBRC 100397 / JF-1)).